The chain runs to 80 residues: UPF0291 protein LACR_1198 (80 aa).

Belongs to the UPF0291 family.

Its subcellular location is the cytoplasm. The polypeptide is UPF0291 protein LACR_1198 (Lactococcus lactis subsp. cremoris (strain SK11)).